The primary structure comprises 247 residues: Probable transcriptional regulatory protein LAF_0541 (247 aa).

The segment at 1-22 (MSGHSKWHNIQGRKNAQDAKRG) is disordered.

This sequence belongs to the TACO1 family.

The protein localises to the cytoplasm. This Limosilactobacillus fermentum (strain NBRC 3956 / LMG 18251) (Lactobacillus fermentum) protein is Probable transcriptional regulatory protein LAF_0541.